Here is a 493-residue protein sequence, read N- to C-terminus: Monodehydroascorbate reductase, chloroplastic/mitochondrial (493 aa).

A chloroplast and mitochondrion-targeting transit peptide spans 1 to 51; that stretch reads MSAVRRVMALASTTLPTKSGLSLWCPSSPSLARRFPARFSPIGSRIASRSL. FAD-binding positions include 68 to 71, E95, R102, K107, and 201 to 202; these read GGNA and RE. NAD(+)-binding positions include 224–230, E248, R254, and G313; that span reads GGYIGME. Residue 226-230 coordinates NADP(+); it reads YIGME. Residues R254 and G313 each contribute to the NADP(+) site. D351 lines the FAD pocket. NAD(+) is bound at residue 367–368; it reads EH. 367–368 serves as a coordination point for NADP(+); sequence EH. An FAD-binding site is contributed by V369. R373 contributes to the L-ascorbate binding site. Y398 contacts FAD. Y398 contributes to the NAD(+) binding site. Y398 contacts NADP(+). L-ascorbate is bound at residue R400.

The protein belongs to the FAD-dependent oxidoreductase family. In terms of assembly, interacts in vitro with TRXy. The cofactor is FAD.

Its subcellular location is the plastid. The protein resides in the chloroplast. It is found in the mitochondrion. It carries out the reaction 2 monodehydro-L-ascorbate radical + NADH + H(+) = 2 L-ascorbate + NAD(+). The enzyme catalyses 2,4,6-trinitrotoluene + NADH = 2,4,6-trinitrotoluene radical + e(-) + NAD(+). With respect to regulation, redox regulation of the activity by thioredoxin TRXy1. Catalyzes the conversion of monodehydroascorbate (MDA) to ascorbate, oxidizing NADH in the process. Mediates phytotoxicity of 2,4,6-trinitrotoluene (TNT), an explosive and environmental pollutant, by reducing TNT and forming a nitro radical that spontaneously reacts with atmospheric oxygen, generating reactive superoxide. Can also use 1-chloro-2,4-dinitrobenzene (CDNB) as substrate, but not 1-chloro-4-nitrobenzene (CNB). The sequence is that of Monodehydroascorbate reductase, chloroplastic/mitochondrial from Arabidopsis thaliana (Mouse-ear cress).